A 424-amino-acid polypeptide reads, in one-letter code: MTAIIDIIGREILDSRGNPTVEVDVHLEDGSFGRAAVPSGASTGAHEAVELRDGGTRYLGKGVERAVDAVNGEIFEAIGGLDAENQIQIDRTMIELDGTPNKSRLGANAILGVSLAVAKAAAEASGLPLYRYVGGPNAHLLPVPMMNIINGGAHADNPIDFQEFMIMPVGAETLKDAVRMGSEVFHTLKKQLAADGHNTNVGDEGGFAPGLASAPAALDFIMKSIEKAGYKPGEDMYVALDCASTEFFKDGKYVLEGEGRTLEPGAMAEYLAELAGKYPIISIEDGMAEDDWDGWKSLTDLVGNKCQLVGDDLFVTNSARLRDGIKMGVANSILVKVNQIGSLSETLDAVETAHKARYTAVMSHRSGETEDSTIADLAVATNCGQIKTGSLARSDRLAKYNQLIRIEEQLGPQAQYAGRSVLRG.

Position 162 (Gln-162) interacts with (2R)-2-phosphoglycerate. Glu-204 functions as the Proton donor in the catalytic mechanism. Mg(2+)-binding residues include Asp-241, Glu-284, and Asp-311. (2R)-2-phosphoglycerate-binding residues include Lys-336, Arg-365, Ser-366, and Lys-387. The Proton acceptor role is filled by Lys-336.

The protein belongs to the enolase family. Mg(2+) serves as cofactor.

Its subcellular location is the cytoplasm. It is found in the secreted. The protein resides in the cell surface. The catalysed reaction is (2R)-2-phosphoglycerate = phosphoenolpyruvate + H2O. The protein operates within carbohydrate degradation; glycolysis; pyruvate from D-glyceraldehyde 3-phosphate: step 4/5. Catalyzes the reversible conversion of 2-phosphoglycerate (2-PG) into phosphoenolpyruvate (PEP). It is essential for the degradation of carbohydrates via glycolysis. This chain is Enolase, found in Rhizobium meliloti (strain 1021) (Ensifer meliloti).